The chain runs to 121 residues: Basic phospholipase A2 homolog piratoxin-1 (121 aa).

Disulfide bonds link Cys-26–Cys-115, Cys-28–Cys-44, Cys-43–Cys-95, Cys-49–Cys-121, Cys-50–Cys-88, Cys-57–Cys-81, and Cys-75–Cys-86. The segment at 105 to 117 (KLYRYHLKPFCKK) is important for membrane-damaging activities in eukaryotes and bacteria; heparin-binding.

The protein belongs to the phospholipase A2 family. Group II subfamily. K49 sub-subfamily. As to quaternary structure, homodimer; non-covalently linked. As to expression, expressed by the venom gland.

It is found in the secreted. With respect to regulation, rosmarinic acid inhibits the myotoxic activity. Bromophenacyl bromide (BPB) inhibits the myotoxic activity through a covalent binding. Caffeic acid and aristolochic acid, two plant compounds used in folk medicine used to treat envenomation, inhibit the myotoxic activity. Snake venom phospholipase A2 (PLA2) homolog that lacks enzymatic activity. Is myotoxic and displays edema-inducing activities. Induces neuromuscular blockage. A model of myotoxic mechanism has been proposed: an apo Lys49-PLA2 is activated by the entrance of a hydrophobic molecule (e.g. fatty acid) at the hydrophobic channel of the protein leading to a reorientation of a monomer. This reorientation causes a transition between 'inactive' to 'active' states, causing alignment of C-terminal and membrane-docking sites (MDoS) side-by-side and putting the membrane-disruption sites (MDiS) in the same plane, exposed to solvent and in a symmetric position for both monomers. The MDoS region stabilizes the toxin on membrane by the interaction of charged residues with phospholipid head groups. Subsequently, the MDiS region destabilizes the membrane with penetration of hydrophobic residues. This insertion causes a disorganization of the membrane, allowing an uncontrolled influx of ions (i.e. calcium and sodium), and eventually triggering irreversible intracellular alterations and cell death. The protein is Basic phospholipase A2 homolog piratoxin-1 of Bothrops pirajai (Piraja's lancehead).